The chain runs to 264 residues: NAD-capped RNA hydrolase NudC (264 aa).

R70 provides a ligand contact to substrate. Residues C99 and C102 each coordinate Zn(2+). A substrate-binding site is contributed by E112. Zn(2+) is bound by residues C117 and C120. Y125 serves as a coordination point for substrate. The region spanning P126–T253 is the Nudix hydrolase domain. A divalent metal cation-binding residues include A162, E178, and E182. The short motif at G163–G184 is the Nudix box element. Q196 to S203 serves as a coordination point for substrate. E223 contributes to the a divalent metal cation binding site. A246 contacts substrate.

It belongs to the Nudix hydrolase family. NudC subfamily. As to quaternary structure, homodimer. Requires Mg(2+) as cofactor. The cofactor is Mn(2+). It depends on Zn(2+) as a cofactor.

The catalysed reaction is a 5'-end NAD(+)-phospho-ribonucleoside in mRNA + H2O = a 5'-end phospho-adenosine-phospho-ribonucleoside in mRNA + beta-nicotinamide D-ribonucleotide + 2 H(+). The enzyme catalyses NAD(+) + H2O = beta-nicotinamide D-ribonucleotide + AMP + 2 H(+). It carries out the reaction NADH + H2O = reduced beta-nicotinamide D-ribonucleotide + AMP + 2 H(+). Functionally, mRNA decapping enzyme that specifically removes the nicotinamide adenine dinucleotide (NAD) cap from a subset of mRNAs by hydrolyzing the diphosphate linkage to produce nicotinamide mononucleotide (NMN) and 5' monophosphate mRNA. The NAD-cap is present at the 5'-end of some mRNAs and stabilizes RNA against 5'-processing. Has preference for mRNAs with a 5'-end purine. Catalyzes the hydrolysis of a broad range of dinucleotide pyrophosphates. The sequence is that of NAD-capped RNA hydrolase NudC from Haemophilus influenzae (strain 86-028NP).